Reading from the N-terminus, the 211-residue chain is MTKVLYVSANPKPTELSYSKQVAETFVSTLKAENASIEVEAIELYDVDVQEIDGDVLSAWGKFASGEALTDVEAKKVGTMSGMLEKFMEADLYVFATPMWNFFFPARMKMFLDSVLMAGKTFRYTEQGPVGLLENKQAIHIQGTGGIYTGTDLNFADAYLRQALAFVGVSEVTTVAVEGMNQYPDKIEEIVADAKAKAEALAKEVAGAVTV.

FMN is bound by residues 17–19 (SYS) and 99–102 (MWNF).

This sequence belongs to the azoreductase type 1 family. In terms of assembly, homodimer. It depends on FMN as a cofactor.

The enzyme catalyses 2 a quinone + NADH + H(+) = 2 a 1,4-benzosemiquinone + NAD(+). The catalysed reaction is N,N-dimethyl-1,4-phenylenediamine + anthranilate + 2 NAD(+) = 2-(4-dimethylaminophenyl)diazenylbenzoate + 2 NADH + 2 H(+). In terms of biological role, quinone reductase that provides resistance to thiol-specific stress caused by electrophilic quinones. Its function is as follows. Also exhibits azoreductase activity. Catalyzes the reductive cleavage of the azo bond in aromatic azo compounds to the corresponding amines. The chain is FMN-dependent NADH:quinone oxidoreductase from Exiguobacterium sp. (strain ATCC BAA-1283 / AT1b).